The chain runs to 228 residues: 2-C-methyl-D-erythritol 4-phosphate cytidylyltransferase (228 aa).

This sequence belongs to the IspD/TarI cytidylyltransferase family. IspD subfamily.

It carries out the reaction 2-C-methyl-D-erythritol 4-phosphate + CTP + H(+) = 4-CDP-2-C-methyl-D-erythritol + diphosphate. It participates in isoprenoid biosynthesis; isopentenyl diphosphate biosynthesis via DXP pathway; isopentenyl diphosphate from 1-deoxy-D-xylulose 5-phosphate: step 2/6. Functionally, catalyzes the formation of 4-diphosphocytidyl-2-C-methyl-D-erythritol from CTP and 2-C-methyl-D-erythritol 4-phosphate (MEP). This chain is 2-C-methyl-D-erythritol 4-phosphate cytidylyltransferase, found in Crocosphaera subtropica (strain ATCC 51142 / BH68) (Cyanothece sp. (strain ATCC 51142)).